The primary structure comprises 462 residues: NADH-quinone oxidoreductase subunit N 1 (462 aa).

Transmembrane regions (helical) follow at residues 4 to 24 (FVVA…VLCL), 32 to 52 (AGFY…WAVA), 60 to 80 (IACF…ALLA), 88 to 108 (FAGD…LLLA), 113 to 133 (WIML…LIAA), 148 to 168 (FLPG…IYAA), 178 to 198 (LAAP…GVGF), 220 to 240 (VAAF…LHVC), 251 to 271 (LWPA…LGAV), 279 to 299 (LLAY…MAVN), 307 to 327 (LFYL…VGAL), 351 to 371 (AGVL…AGFV), 374 to 394 (FLVF…FGII), 416 to 436 (LIAH…ALGV), and 439 to 459 (AGLV…AALF).

This sequence belongs to the complex I subunit 2 family. NDH-1 is composed of 14 different subunits. Subunits NuoA, H, J, K, L, M, N constitute the membrane sector of the complex.

The protein resides in the cell inner membrane. The enzyme catalyses a quinone + NADH + 5 H(+)(in) = a quinol + NAD(+) + 4 H(+)(out). Functionally, NDH-1 shuttles electrons from NADH, via FMN and iron-sulfur (Fe-S) centers, to quinones in the respiratory chain. The immediate electron acceptor for the enzyme in this species is believed to be ubiquinone. Couples the redox reaction to proton translocation (for every two electrons transferred, four hydrogen ions are translocated across the cytoplasmic membrane), and thus conserves the redox energy in a proton gradient. This Solidesulfovibrio magneticus (strain ATCC 700980 / DSM 13731 / RS-1) (Desulfovibrio magneticus) protein is NADH-quinone oxidoreductase subunit N 1.